Reading from the N-terminus, the 408-residue chain is Peptidase T (408 aa).

Residues 1–28 form a disordered region; sequence MKNQLIDRLTRYTTIDTQSDPKSTTTPS. Residues 11–28 are compositionally biased toward polar residues; that stretch reads RYTTIDTQSDPKSTTTPS. Position 78 (His78) interacts with Zn(2+). Asp80 is a catalytic residue. Asp140 lines the Zn(2+) pocket. Glu174 (proton acceptor) is an active-site residue. The Zn(2+) site is built by Glu175, Asp197, and His379.

Belongs to the peptidase M20B family. Zn(2+) is required as a cofactor.

The protein localises to the cytoplasm. It carries out the reaction Release of the N-terminal residue from a tripeptide.. Functionally, cleaves the N-terminal amino acid of tripeptides. The polypeptide is Peptidase T (Staphylococcus aureus (strain USA300 / TCH1516)).